The primary structure comprises 301 residues: 2-(hydroxymethyl)glutarate dehydrogenase (301 aa).

Residues 8-22 (GFIG…MAIN) and Ser-99 each bind NAD(+). Lys-174 is an active-site residue. Lys-243 is a binding site for NAD(+).

It belongs to the HIBADH-related family. As to quaternary structure, homotetramer.

It catalyses the reaction (S)-2-hydroxymethylglutarate + NAD(+) = 2-formylglutarate + NADH + H(+). It functions in the pathway cofactor degradation; nicotinate degradation; propanoate and pyruvate from 6-hydroxynicotinate: step 3/8. Functionally, catalyzes the conversion of 2-formylglutarate to (S)-2-hydroxymethylglutarate. Has very low activity with (S)-3-hydroxyisobutyrate. This is 2-(hydroxymethyl)glutarate dehydrogenase from Eubacterium barkeri (Clostridium barkeri).